Consider the following 339-residue polypeptide: BTB/POZ domain-containing protein KCTD9 (339 aa).

Positions 3–82 (RVTLFLNGSP…PQTDARPPGG (80 aa)) constitute a KHA domain. Residue serine 11 is modified to Phosphoserine. A BTB domain is found at 89-161 (DWLTLNVGGR…LRHGQLIVND (73 aa)). Pentapeptide repeat domains follow at residues 223-247 (ANLQGVKMLCSNAEGASLRLCNFED), 253-292 (ANLEGANLKGVDMEGSQMTGINLRVATLKNAKLKNCNLRG), and 293-327 (ATLAGTDLENCDLSGCDLQEANLRGSNVKGAIFEE).

As to quaternary structure, forms pentamers. Component of a complex mades of five KCTD9 and five CUL3 subunits.

The protein operates within protein modification; protein ubiquitination. Substrate-specific adapter of a BCR (BTB-CUL3-RBX1) E3 ubiquitin-protein ligase complex, which mediates the ubiquitination of target proteins, leading to their degradation by the proteasome. The sequence is that of BTB/POZ domain-containing protein KCTD9 (Kctd9) from Mus musculus (Mouse).